A 312-amino-acid chain; its full sequence is tRNA (adenine(58)-N(1))-methyltransferase catalytic subunit trmt61a (312 aa).

S-adenosyl-L-methionine contacts are provided by residues leucine 85, 112 to 114, glutamate 133, arginine 138, 161 to 162, and aspartate 183; these read SGS and DA.

The protein belongs to the class I-like SAM-binding methyltransferase superfamily. TRM61 family. Heterotetramer; composed of two copies of trmt6 and two copies of trmt61a.

Its subcellular location is the nucleus. The catalysed reaction is adenosine(58) in tRNA + S-adenosyl-L-methionine = N(1)-methyladenosine(58) in tRNA + S-adenosyl-L-homocysteine + H(+). With respect to regulation, inhibited by calcium and magnesium ions and spermidine. Enhanced by KCl, NaCl and NH(4)Cl in concentrations from 0.1-0.25 M. Concentrations of more than 0.3 M are inhibitory. Functionally, catalytic subunit of tRNA (adenine-N(1)-)-methyltransferase, which catalyzes the formation of N(1)-methyladenine at position 58 (m1A58) in initiator methionyl-tRNA. This Dictyostelium discoideum (Social amoeba) protein is tRNA (adenine(58)-N(1))-methyltransferase catalytic subunit trmt61a (trmt61a).